Here is a 646-residue protein sequence, read N- to C-terminus: Hypoxia up-regulated protein 1 (646 aa).

The signal sequence occupies residues 1–22; that stretch reads MRPLVCVLWMFLFALLSSHTES. The tract at residues 572 to 646 is disordered; sequence LFGGGSSVSE…KEEEKAEPQE (75 aa). The span at 590–610 shows a compositional bias: acidic residues; sequence VQEEDEVPTEPTKEEEQESAD. Residues 611–646 show a composition bias toward basic and acidic residues; the sequence is PADKQQDKENNKEKGTSATNEKEEGKKEEEKAEPQE.

Belongs to the heat shock protein 70 family.

Its subcellular location is the endoplasmic reticulum lumen. Its function is as follows. Has a pivotal role in cytoprotective cellular mechanisms triggered by oxygen deprivation. May play a role as a molecular chaperone and participate in protein folding. The sequence is that of Hypoxia up-regulated protein 1 (hyou1) from Xenopus laevis (African clawed frog).